A 456-amino-acid polypeptide reads, in one-letter code: Histidine--tRNA ligase (456 aa).

This sequence belongs to the class-II aminoacyl-tRNA synthetase family. In terms of assembly, homodimer.

It localises to the cytoplasm. The catalysed reaction is tRNA(His) + L-histidine + ATP = L-histidyl-tRNA(His) + AMP + diphosphate + H(+). This is Histidine--tRNA ligase from Borreliella afzelii (strain PKo) (Borrelia afzelii).